The primary structure comprises 173 residues: Glucagon family neuropeptides (173 aa).

A signal peptide spans 1–22 (MSSKATLALLIYGIIMHYSVYS). The propeptide occupies 23 to 80 (SPLGLNYPNLRLENEVYDEDGNSLPALAFDSDQIAIRSPPSVADDLYTLYYPPEKGTE). At Lys166 the chain carries Lysine amide. The propeptide occupies 170–173 (LGYL).

It belongs to the glucagon family.

It localises to the secreted. Primary role of GHRH is to release GH from the pituitary. Functionally, PACAP plays pivotal roles as a neurotransmitter and/or a neuromodulator. This Oncorhynchus nerka (Sockeye salmon) protein is Glucagon family neuropeptides.